Reading from the N-terminus, the 553-residue chain is Solute carrier family 45 member 3 (553 aa).

11 helical membrane-spanning segments follow: residues 19-39 (LLINLLTFGLEVCLAAGITYV), 52-72 (FMTMVLGIGPVLGLVSVPLLG), 88-108 (FIWALSLGILLSLFLIPRAGW), 120-140 (LELALLILGVGLLDFCGQVCF), 161-181 (YSVYAFMISLGGCLGYLLPAI), 198-218 (CLFGLLTLIFLTCVAATLLVA), 275-295 (FVAELCSWMALMTFTLFYTDF), 323-343 (MGSLGLFLQCAISLVFSLVMD), 353-373 (AVYLASVAAFPVAAGATCLSH), 382-402 (AALTGFTFSALQILPYTLASL), and 522-542 (AYMVSAAGLGLVAIYFATQVV).

It belongs to the glycoside-pentoside-hexuronide (GPH) cation symporter transporter (TC 2.A.2) family.

The protein resides in the membrane. The enzyme catalyses sucrose(out) + H(+)(out) = sucrose(in) + H(+)(in). Its function is as follows. Proton-associated sucrose transporter. May be able to transport also glucose and fructose. The polypeptide is Solute carrier family 45 member 3 (SLC45A3) (Macaca fascicularis (Crab-eating macaque)).